A 643-amino-acid chain; its full sequence is RNA-binding protein RO60 (643 aa).

Positions 63–473 constitute a TROVE domain; that stretch reads VENNAGGFVF…AFVNAPPTGK (411 aa). Residues 186-390 are RNA-binding; sequence RTPTHLFEFV…SMPMTAMIRN (205 aa). Positions 465 to 643 are VWFA-like domain; the sequence is FVNAPPTGKR…IVHEFVTGKI (179 aa). 3 residues coordinate a divalent metal cation: S482, S484, and T549.

It belongs to the Ro 60 kDa family.

Its subcellular location is the cytoplasm. RNA-binding protein that binds to misfolded non-coding RNAs, pre-5S rRNA, and several small cytoplasmic RNA molecules known as Y RNAs. This Caenorhabditis elegans protein is RNA-binding protein RO60.